The sequence spans 694 residues: Elongation factor G (694 aa).

The 280-residue stretch at 9 to 288 (DAIRNIGIMA…VIVKWLPSPL (280 aa)) folds into the tr-type G domain. Residues 18–25 (AHIDAGKT), 82–86 (DTPGH), and 136–139 (NKMD) each bind GTP.

Belongs to the TRAFAC class translation factor GTPase superfamily. Classic translation factor GTPase family. EF-G/EF-2 subfamily.

It localises to the cytoplasm. In terms of biological role, catalyzes the GTP-dependent ribosomal translocation step during translation elongation. During this step, the ribosome changes from the pre-translocational (PRE) to the post-translocational (POST) state as the newly formed A-site-bound peptidyl-tRNA and P-site-bound deacylated tRNA move to the P and E sites, respectively. Catalyzes the coordinated movement of the two tRNA molecules, the mRNA and conformational changes in the ribosome. This chain is Elongation factor G, found in Chlamydia trachomatis serovar A (strain ATCC VR-571B / DSM 19440 / HAR-13).